A 109-amino-acid chain; its full sequence is Protein reprimo (109 aa).

N-linked (GlcNAc...) asparagine glycans are attached at residues asparagine 7 and asparagine 18. The helical transmembrane segment at 56 to 76 threads the bilayer; that stretch reads VVQIAVMCVLSLTVVFGIFFL. Serine 98 is modified (phosphoserine).

Belongs to the reprimo family.

It is found in the cytoplasm. Its subcellular location is the membrane. May be involved in the regulation of p53-dependent G2 arrest of the cell cycle. Seems to induce cell cycle arrest by inhibiting CDK1 activity and nuclear translocation of the CDC2 cyclin B1 complex. In Bos taurus (Bovine), this protein is Protein reprimo (RPRM).